The sequence spans 504 residues: Maturase K (504 aa).

Belongs to the intron maturase 2 family. MatK subfamily.

Its subcellular location is the plastid. The protein localises to the chloroplast. In terms of biological role, usually encoded in the trnK tRNA gene intron. Probably assists in splicing its own and other chloroplast group II introns. The protein is Maturase K of Capsella bursa-pastoris (Shepherd's purse).